The sequence spans 437 residues: Enolase (437 aa).

Glutamine 162 contacts (2R)-2-phosphoglycerate. Glutamate 204 acts as the Proton donor in catalysis. 3 residues coordinate Mg(2+): aspartate 251, glutamate 297, and aspartate 324. (2R)-2-phosphoglycerate-binding residues include lysine 349, arginine 378, serine 379, and lysine 400. The active-site Proton acceptor is lysine 349.

Belongs to the enolase family. Mg(2+) is required as a cofactor.

It localises to the cytoplasm. It is found in the secreted. The protein localises to the cell surface. The catalysed reaction is (2R)-2-phosphoglycerate = phosphoenolpyruvate + H2O. The protein operates within carbohydrate degradation; glycolysis; pyruvate from D-glyceraldehyde 3-phosphate: step 4/5. Functionally, catalyzes the reversible conversion of 2-phosphoglycerate (2-PG) into phosphoenolpyruvate (PEP). It is essential for the degradation of carbohydrates via glycolysis. The sequence is that of Enolase from Chlorobium phaeobacteroides (strain DSM 266 / SMG 266 / 2430).